Consider the following 442-residue polypeptide: Large ribosomal subunit protein mL65 (442 aa).

It belongs to the mitochondrion-specific ribosomal protein mL65 family. As to quaternary structure, component of the mitochondrial ribosome small subunit (28S) which comprises a 12S rRNA and about 30 distinct proteins.

The protein localises to the mitochondrion. This is Large ribosomal subunit protein mL65 (Mrps30) from Mus musculus (Mouse).